The sequence spans 409 residues: Major capsid protein (409 aa).

The protein belongs to the lambda phage major capsid protein family. As to quaternary structure, homomultimer. Interacts with the portal protein. Interacts with the decoration protein.

It is found in the virion. Its subcellular location is the host cytoplasm. In terms of biological role, assembles to form an icosahedric capsid shell with a T=7 symmetry although with a diameter of about 82 nm, which is a larger volume than the usual T=7 capsids. A dramatic reconfiguration of the capsid shell that expands the procaspid from a diameter of 66 nm to a supersized capsid of 82 nm, allows packaging of the large viral DNA genome. The capsid decoration protein binds the expanded capsid and stabilizes it. This chain is Major capsid protein, found in Thermus virus P23-45 (Thermus thermophilus phage P23-45).